The following is a 473-amino-acid chain: 23S rRNA (uracil(1939)-C(5))-methyltransferase RlmD (473 aa).

The interval 6–27 is disordered; it reads KPSKGKNKSNVKGRVRGAGSGE. Over residues 8–20 the composition is skewed to basic residues; it reads SKGKNKSNVKGRV. The 58-residue stretch at 42-99 folds into the TRAM domain; that stretch reads DDINAANEAVTIDGMDWQGQGVARGDTLYFVDGALPGETVEIKALSSNKQIVNAKVTK. The [4Fe-4S] cluster site is built by Cys112, Cys118, Cys121, and Cys199. 6 residues coordinate S-adenosyl-L-methionine: Gln304, Phe333, Asn338, Glu354, Asp381, and Asp402. The active-site Nucleophile is the Cys428.

It belongs to the class I-like SAM-binding methyltransferase superfamily. RNA M5U methyltransferase family. RlmD subfamily.

The enzyme catalyses uridine(1939) in 23S rRNA + S-adenosyl-L-methionine = 5-methyluridine(1939) in 23S rRNA + S-adenosyl-L-homocysteine + H(+). Its function is as follows. Catalyzes the formation of 5-methyl-uridine at position 1939 (m5U1939) in 23S rRNA. This Alteromonas naphthalenivorans protein is 23S rRNA (uracil(1939)-C(5))-methyltransferase RlmD.